The chain runs to 137 residues: Cellular retinoic acid-binding protein 1 (137 aa).

The short motif at Lys21–Lys31 is the Nuclear localization signal element. An all-trans-retinoate-binding site is contributed by Arg132–Tyr134.

The protein belongs to the calycin superfamily. Fatty-acid binding protein (FABP) family.

It localises to the cytoplasm. In terms of biological role, cytosolic CRABPs may regulate the access of retinoic acid to the nuclear retinoic acid receptors. The chain is Cellular retinoic acid-binding protein 1 (crabp1) from Takifugu rubripes (Japanese pufferfish).